Reading from the N-terminus, the 1342-residue chain is DNA-directed RNA polymerase subunit beta (1342 aa).

The protein belongs to the RNA polymerase beta chain family. The RNAP catalytic core consists of 2 alpha, 1 beta, 1 beta' and 1 omega subunit. When a sigma factor is associated with the core the holoenzyme is formed, which can initiate transcription.

The enzyme catalyses RNA(n) + a ribonucleoside 5'-triphosphate = RNA(n+1) + diphosphate. DNA-dependent RNA polymerase catalyzes the transcription of DNA into RNA using the four ribonucleoside triphosphates as substrates. This chain is DNA-directed RNA polymerase subunit beta, found in Actinobacillus pleuropneumoniae serotype 5b (strain L20).